We begin with the raw amino-acid sequence, 532 residues long: Intercellular adhesion molecule 1 (532 aa).

Positions 1 to 27 (MAPSSPRPALPALLVLLGALFPGPGNA) are cleaved as a signal peptide. The Extracellular segment spans residues 28 to 480 (QTSVSPPKVI…TVNVLSPRYE (453 aa)). 2 Ig-like C2-type domains span residues 41 to 103 (GGSV…QSTA) and 128 to 193 (GKDL…LDLR). 3 disulfides stabilise this stretch: Cys48-Cys92, Cys52-Cys96, and Cys135-Cys186. Residues 152–154 (RGE) carry the Cell attachment site; atypical motif. Residues Asn202 and Asn267 are each glycosylated (N-linked (GlcNAc...) asparagine). Ig-like C2-type domains follow at residues 230 to 297 (DTQG…LGTQ) and 325 to 378 (GTEV…LEVA). Disulfide bonds link Cys237–Cys290 and Cys332–Cys371. N-linked (GlcNAc...) asparagine glycans are attached at residues Asn385 and Asn406. 3 disulfide bridges follow: Cys403–Cys419, Cys419–Cys457, and Cys431–Cys457. Residues 412-464 (NSQQTPMCQAWGNPLPELKCLKDGTFPLPVGESVTVTRDLEGTYLCRARSTQG) enclose the Ig-like C2-type 5 domain. A helical transmembrane segment spans residues 481–503 (FVIIAVVAAAVIMGTAGLSTYLY). Topologically, residues 504–532 (NRQRKIRKYRLQQAQKGTPMKPNTQATPP) are cytoplasmic. Phosphothreonine is present on residues Thr521 and Thr530.

This sequence belongs to the immunoglobulin superfamily. ICAM family. Homodimer. Interacts with MUC1 and promotes cell aggregation in epithelial cells. Interacts with ARHGEF26/SGEF. Interacts (on T cell side) with CD81, CD247 and CD9 at immunological synapses between antigen-presenting cells and T cells. Monoubiquitinated, which is promoted by MARCH9 and leads to endocytosis.

It localises to the membrane. Functionally, ICAM proteins are ligands for the leukocyte adhesion protein LFA-1 (integrin alpha-L/beta-2). During leukocyte trans-endothelial migration, ICAM1 engagement promotes the assembly of endothelial apical cups through ARHGEF26/SGEF and RHOG activation. The chain is Intercellular adhesion molecule 1 (ICAM1) from Gorilla gorilla gorilla (Western lowland gorilla).